The chain runs to 360 residues: Photosystem II protein D1 (360 aa).

3 helical membrane passes run 29 to 46, 118 to 133, and 142 to 156; these read YIGW…TATT, HFLL…EWEF, and WISV…AASA. His118 contacts chlorophyll a. Residue Trp126 coordinates pheophytin a. Positions 170 and 189 each coordinate [CaMn4O5] cluster. A helical transmembrane segment spans residues 197-218; it reads FHQLGVAGVFGGSLFSAMHGSL. A chlorophyll a-binding site is contributed by His198. Residues His215 and 264-265 each bind a quinone; that span reads SF. His215 contributes to the Fe cation binding site. Residue His272 participates in Fe cation binding. The helical transmembrane segment at 274–288 threads the bilayer; sequence FLGLWPVVGIWFTAL. 4 residues coordinate [CaMn4O5] cluster: His332, Glu333, Asp342, and Ala344. The propeptide occupies 345–360; that stretch reads AGESLPVALTAPAVNG.

The protein belongs to the reaction center PufL/M/PsbA/D family. As to quaternary structure, PSII is composed of 1 copy each of membrane proteins PsbA, PsbB, PsbC, PsbD, PsbE, PsbF, PsbH, PsbI, PsbJ, PsbK, PsbL, PsbM, PsbT, PsbX, PsbY, PsbZ, Psb30/Ycf12, at least 3 peripheral proteins of the oxygen-evolving complex and a large number of cofactors. It forms dimeric complexes. The cofactor is The D1/D2 heterodimer binds P680, chlorophylls that are the primary electron donor of PSII, and subsequent electron acceptors. It shares a non-heme iron and each subunit binds pheophytin, quinone, additional chlorophylls, carotenoids and lipids. D1 provides most of the ligands for the Mn4-Ca-O5 cluster of the oxygen-evolving complex (OEC). There is also a Cl(-1) ion associated with D1 and D2, which is required for oxygen evolution. The PSII complex binds additional chlorophylls, carotenoids and specific lipids.. In terms of processing, tyr-161 forms a radical intermediate that is referred to as redox-active TyrZ, YZ or Y-Z. Post-translationally, C-terminally processed by CTPA; processing is essential to allow assembly of the oxygen-evolving complex and thus photosynthetic growth.

The protein localises to the plastid. Its subcellular location is the chloroplast thylakoid membrane. The catalysed reaction is 2 a plastoquinone + 4 hnu + 2 H2O = 2 a plastoquinol + O2. Photosystem II (PSII) is a light-driven water:plastoquinone oxidoreductase that uses light energy to abstract electrons from H(2)O, generating O(2) and a proton gradient subsequently used for ATP formation. It consists of a core antenna complex that captures photons, and an electron transfer chain that converts photonic excitation into a charge separation. The D1/D2 (PsbA/PsbD) reaction center heterodimer binds P680, the primary electron donor of PSII as well as several subsequent electron acceptors. The chain is Photosystem II protein D1 from Rhodomonas salina (Cryptomonas salina).